The sequence spans 204 residues: Small ribosomal subunit protein uS3 (204 aa).

The KH type-2 domain occupies 37–105 (IRSYINESFK…NVEVNVVGVK (69 aa)).

Belongs to the universal ribosomal protein uS3 family. Part of the 30S ribosomal subunit. Forms a tight complex with proteins S10 and S14.

Its function is as follows. Binds the lower part of the 30S subunit head. Binds mRNA in the 70S ribosome, positioning it for translation. The polypeptide is Small ribosomal subunit protein uS3 (Wolbachia pipientis wMel).